We begin with the raw amino-acid sequence, 140 residues long: ATP synthase epsilon chain (140 aa).

The protein belongs to the ATPase epsilon chain family. In terms of assembly, F-type ATPases have 2 components, CF(1) - the catalytic core - and CF(0) - the membrane proton channel. CF(1) has five subunits: alpha(3), beta(3), gamma(1), delta(1), epsilon(1). CF(0) has three main subunits: a, b and c.

It is found in the cell inner membrane. In terms of biological role, produces ATP from ADP in the presence of a proton gradient across the membrane. This is ATP synthase epsilon chain from Xylella fastidiosa (strain Temecula1 / ATCC 700964).